A 206-amino-acid polypeptide reads, in one-letter code: Thymidylate kinase (206 aa).

G7–T14 contributes to the ATP binding site.

It belongs to the thymidylate kinase family.

The catalysed reaction is dTMP + ATP = dTDP + ADP. Functionally, phosphorylation of dTMP to form dTDP in both de novo and salvage pathways of dTTP synthesis. The protein is Thymidylate kinase of Synechococcus sp. (strain JA-2-3B'a(2-13)) (Cyanobacteria bacterium Yellowstone B-Prime).